The following is a 150-amino-acid chain: Large ribosomal subunit protein bL9 (150 aa).

Belongs to the bacterial ribosomal protein bL9 family.

In terms of biological role, binds to the 23S rRNA. In Burkholderia ambifaria (strain MC40-6), this protein is Large ribosomal subunit protein bL9.